Reading from the N-terminus, the 97-residue chain is UPF0223 protein lp_2149 (97 aa).

It belongs to the UPF0223 family.

In Lactiplantibacillus plantarum (strain ATCC BAA-793 / NCIMB 8826 / WCFS1) (Lactobacillus plantarum), this protein is UPF0223 protein lp_2149.